We begin with the raw amino-acid sequence, 419 residues long: eIF5-mimic protein 1 (419 aa).

The tract at residues 1-22 (MNKHQKPVLTGQRFKTRKRDEK) is disordered. Lysine 117 carries the N6-acetyllysine modification. One can recognise a W2 domain in the interval 248 to 415 (VQQSLGTRKE…QNAEEESESE (168 aa)). Residues serine 412, serine 414, and serine 419 each carry the phosphoserine modification.

It belongs to the BZW family. Interacts with EIF3E, EIF2S2 and EIF3C. Expressed at high levels in heart, and at lower levels in skeletal muscle, spleen and lung. Expressed at low levels in brain regions where nascent and immature neurons are present.

It is found in the cytoplasm. Its function is as follows. Translation initiation regulator which represses non-AUG initiated translation and repeat-associated non-AUG (RAN) initiated translation by acting as a competitive inhibitor of eukaryotic translation initiation factor 5 (EIF5) function. Increases the accuracy of translation initiation by impeding EIF5-dependent translation from non-AUG codons by competing with it for interaction with EIF2S2 within the 43S pre-initiation complex (PIC) in an EIF3C-binding dependent manner. The sequence is that of eIF5-mimic protein 1 (Bzw2) from Rattus norvegicus (Rat).